A 102-amino-acid polypeptide reads, in one-letter code: MVTEIKSLKQLGELFASNNKVIIDFWAEWCGPCKITGPEFAKAASEVSTVAFAKVNVDEQTDIAAAYKITSLPTIVLFEKGQEKHRAIGFMPKAKIVQLVSQ.

The Thioredoxin domain maps to 2-102; that stretch reads VTEIKSLKQL…KAKIVQLVSQ (101 aa). A disulfide bridge links Cys30 with Cys33.

Belongs to the thioredoxin family.

In terms of biological role, participates in various redox reactions through the reversible oxidation of its active center dithiol to a disulfide and catalyzes dithiol-disulfide exchange reactions. This is Thioredoxin (trxA) from Mycoplasma pneumoniae (strain ATCC 29342 / M129 / Subtype 1) (Mycoplasmoides pneumoniae).